We begin with the raw amino-acid sequence, 274 residues long: Carbonic anhydrase (274 aa).

Residues cysteine 39, histidine 98, and cysteine 101 each coordinate Zn(2+). Positions 214-274 are disordered; sequence EDEYAPHPNS…QAERIYRGSR (61 aa). Basic and acidic residues-rich tracts occupy residues 234–245 and 261–274; these read PGKERPGREKAT and LPRE…RGSR.

Belongs to the beta-class carbonic anhydrase family. As to quaternary structure, a hexamer formed by a trimer of dimers. Interacts with the first 260 residues of CcmM; both the N-terminal 206 residues and the C-terminal tail contribute to CcmM binding. Interacts with full-length and the N-terminal 249 residues of CcmM. A probable CcmM-CcaA-CcmN complex as well as a CcaA-RuBisCO-CcmM complex can also be isolated. Zn(2+) serves as cofactor.

It is found in the carboxysome. It carries out the reaction hydrogencarbonate + H(+) = CO2 + H2O. Inhibited by ethoxyzolamide. In terms of biological role, reversible hydration of carbon dioxide. Essential to photosynthetic carbon dioxide fixation, supplies CO(2) to RuBisCO (ribulose bisphosphate carboxylase, rbcL-rbcS) in the carboxysome. The polypeptide is Carbonic anhydrase (Synechocystis sp. (strain ATCC 27184 / PCC 6803 / Kazusa)).